The primary structure comprises 511 residues: Ribonuclease E/G-like protein (511 aa).

The S1 motif domain maps to 35-117 (SDIYLGTVDK…LTANITLSGR (83 aa)). Positions 296 and 339 each coordinate Mg(2+).

Belongs to the RNase E/G family. It depends on Mg(2+) as a cofactor.

Its subcellular location is the plastid. The protein localises to the chloroplast stroma. Its function is as follows. Involved in intercistronic processing of primary transcripts from chloroplast operons. The endonucleolytic activity of the enzyme depends on the number of phosphates at the 5' end, is inhibited by structured RNA, and preferentially cleaves A/U-rich sequences. The polypeptide is Ribonuclease E/G-like protein (rne) (Porphyra purpurea (Red seaweed)).